We begin with the raw amino-acid sequence, 60 residues long: UPF0434 protein Pnap_1922 (60 aa).

Belongs to the UPF0434 family.

In Polaromonas naphthalenivorans (strain CJ2), this protein is UPF0434 protein Pnap_1922.